We begin with the raw amino-acid sequence, 401 residues long: MKNLVINCGSSSIKYQFIDMKDETVLAKGLVERIGIKGSVITHKVNGEKYVTETPMEDHKKAIKLVLDALLNDEYGVIKNIDEISAVGHRIVHGGEKYANSVLIDEDVMKSIEDCVSLAPLHNPPHIIGINACKELMPNVPMVAVFDTAFHQTIPDYAYMYAIPYEYYDKYKIRKYGFHGTSHKYVSRTAAEFIGKKVEDLKMVVCHMGNGASITAVENGKSVDTSMGFTPLGGLAMGTRSGDMDPAVVTFLMDKLNINASEVNNLLNKKSGIEGLSGISSDMRDIKKGNYVDKDPKAMLAYSVFNYKIKQFIGSYTAVMNGLDCLVFTGGIGENSFENRREICKNMDYLGIKIDDKKNDETMGIPMDISAEGSKVRVLVIPTNEELMIARDTKDIVGKLK.

Position 7 (N7) interacts with Mg(2+). K14 is an ATP binding site. Substrate is bound at residue R90. D147 (proton donor/acceptor) is an active-site residue. Residues 207 to 211 (HMGNG), 282 to 284 (DMR), and 331 to 335 (GIGEN) contribute to the ATP site. E385 lines the Mg(2+) pocket.

The protein belongs to the acetokinase family. In terms of assembly, homodimer. Mg(2+) is required as a cofactor. Requires Mn(2+) as cofactor.

It is found in the cytoplasm. The catalysed reaction is acetate + ATP = acetyl phosphate + ADP. Its pathway is metabolic intermediate biosynthesis; acetyl-CoA biosynthesis; acetyl-CoA from acetate: step 1/2. Catalyzes the formation of acetyl phosphate from acetate and ATP. Can also catalyze the reverse reaction. The polypeptide is Acetate kinase (Clostridium acetobutylicum (strain ATCC 824 / DSM 792 / JCM 1419 / IAM 19013 / LMG 5710 / NBRC 13948 / NRRL B-527 / VKM B-1787 / 2291 / W)).